The following is a 242-amino-acid chain: Probable transcriptional regulatory protein XAC3151 (242 aa).

Belongs to the TACO1 family.

The protein resides in the cytoplasm. This chain is Probable transcriptional regulatory protein XAC3151, found in Xanthomonas axonopodis pv. citri (strain 306).